Consider the following 186-residue polypeptide: Translation initiation factor IF-3 (186 aa).

Residues 1-20 form a disordered region; it reads MINRNSGKDRDRSRSGDKEL.

It belongs to the IF-3 family. As to quaternary structure, monomer.

It is found in the cytoplasm. IF-3 binds to the 30S ribosomal subunit and shifts the equilibrium between 70S ribosomes and their 50S and 30S subunits in favor of the free subunits, thus enhancing the availability of 30S subunits on which protein synthesis initiation begins. In Borrelia duttonii (strain Ly), this protein is Translation initiation factor IF-3.